An 80-amino-acid polypeptide reads, in one-letter code: RNA-binding protein KhpA (80 aa).

In terms of domain architecture, KH spans L33 to D80.

It belongs to the KhpA RNA-binding protein family. In terms of assembly, forms a complex with KhpB.

It localises to the cytoplasm. In terms of biological role, a probable RNA chaperone. Forms a complex with KhpB which binds to cellular RNA and controls its expression. Plays a role in peptidoglycan (PG) homeostasis and cell length regulation. The polypeptide is RNA-binding protein KhpA (Treponema pallidum (strain Nichols)).